Consider the following 270-residue polypeptide: Checkpoint signal transducer rad24 (270 aa).

2 positions are modified to phosphoserine: Ser34 and Ser66. Residues 242–270 (AAAGGNTEGAQENAPSNAPEGEAEPKADA) form a disordered region.

This sequence belongs to the 14-3-3 family. Homodimer. Binds preferentially to mei2 phosphorylated by ran1/pat1. Binds preferentially to cdc25 phosphorylated by srk1 during G2; the interaction is increased during osmotic stress. Interacts with byr2. Interacts with rad25.

Its subcellular location is the cytoplasm. Functionally, acts in cell cycle and stress checkpoint signaling by sequestering signal transducers regulated by the checkpoints. Required for the DNA damage checkpoint that ensures that DNA damage is repaired before mitosis is attempted. During environmental stress, sequesters srk1-phosphorylated cdc25 in the cytoplasm to delay the G2/M transition. Sequesters byr2 in the cytoplasm to prevent its translocation to the plasma membrane. Sequesters ran1/pat1-phosphorylated mei2 from its non-coding RNA activators (including meiRNA), to prevent meiotic induction in vegetative cells and to regulate meiosis I. The sequence is that of Checkpoint signal transducer rad24 from Schizosaccharomyces pombe (strain 972 / ATCC 24843) (Fission yeast).